Consider the following 217-residue polypeptide: ATP phosphoribosyltransferase (217 aa).

The protein belongs to the ATP phosphoribosyltransferase family. Short subfamily. Heteromultimer composed of HisG and HisZ subunits.

Its subcellular location is the cytoplasm. The enzyme catalyses 1-(5-phospho-beta-D-ribosyl)-ATP + diphosphate = 5-phospho-alpha-D-ribose 1-diphosphate + ATP. Its pathway is amino-acid biosynthesis; L-histidine biosynthesis; L-histidine from 5-phospho-alpha-D-ribose 1-diphosphate: step 1/9. In terms of biological role, catalyzes the condensation of ATP and 5-phosphoribose 1-diphosphate to form N'-(5'-phosphoribosyl)-ATP (PR-ATP). Has a crucial role in the pathway because the rate of histidine biosynthesis seems to be controlled primarily by regulation of HisG enzymatic activity. The polypeptide is ATP phosphoribosyltransferase (Burkholderia ambifaria (strain MC40-6)).